Reading from the N-terminus, the 258-residue chain is Tryptophan synthase alpha chain (258 aa).

Catalysis depends on proton acceptor residues Glu-52 and Asp-63.

It belongs to the TrpA family. In terms of assembly, tetramer of two alpha and two beta chains.

The catalysed reaction is (1S,2R)-1-C-(indol-3-yl)glycerol 3-phosphate + L-serine = D-glyceraldehyde 3-phosphate + L-tryptophan + H2O. Its pathway is amino-acid biosynthesis; L-tryptophan biosynthesis; L-tryptophan from chorismate: step 5/5. The alpha subunit is responsible for the aldol cleavage of indoleglycerol phosphate to indole and glyceraldehyde 3-phosphate. This chain is Tryptophan synthase alpha chain, found in Streptococcus pneumoniae (strain 70585).